The primary structure comprises 735 residues: Serine/threonine-protein kinase BRSK2 (735 aa).

In terms of domain architecture, Protein kinase spans Tyr20 to Tyr271. ATP-binding positions include Leu26 to Val34 and Lys49. Asp142 functions as the Proton acceptor in the catalytic mechanism. Thr175 carries the phosphothreonine; by LKB1 modification. Position 261 is a phosphothreonine; by PKA (Thr261). Ser295 carries the post-translational modification Phosphoserine. Positions Asp298–Asp340 constitute a UBA domain. Residues Pro346–Asp367 are compositionally biased toward basic and acidic residues. Disordered stretches follow at residues Pro346–Trp476, Phe493–Ser514, and Lys682–Pro735. Phosphoserine occurs at positions 368, 383, 394, 413, 417, 424, and 428. Residues Ser411 to Pro429 show a composition bias toward low complexity. Residues Thr432–Lys446 are compositionally biased toward pro residues. At Ser456 the chain carries Phosphoserine. Thr460, Thr464, and Thr510 each carry phosphothreonine. Phosphoserine occurs at positions 513 and 514.

This sequence belongs to the protein kinase superfamily. CAMK Ser/Thr protein kinase family. SNF1 subfamily. As to quaternary structure, interacts with FZR1, a regulatory subunit of the APC ubiquitin ligase complex. Interacts with COPS5. Interacts with PAK1. Mg(2+) is required as a cofactor. May be phosphorylated at Thr-261 by PKA. Phosphorylated at Thr-175 by STK11/LKB1 in complex with STE20-related adapter-alpha (STRADA) pseudo kinase and CAB39. Not phosphorylated at Thr-175 by CaMKK2. In contrast, it is phosphorylated and activated by CaMKK1. May be inactivated via dephosphorylation of Thr-175 by PP2C. Post-translationally, polyubiquitinated by the APC complex in conjunction with FZR1, leading to its proteasomal degradation. Targeted for proteasomal degradation by interaction with COPS5. BRSK2 levels change during the cell cycle. BRSK2 levels are low at the G1/S boundary and gradually increase as cells progress into G2 phase. BRSK2 levels decrease rapidly at the end of mitosis.

Its subcellular location is the cytoplasm. It is found in the cytoskeleton. The protein localises to the microtubule organizing center. It localises to the centrosome. The protein resides in the perinuclear region. Its subcellular location is the endoplasmic reticulum. The catalysed reaction is L-seryl-[protein] + ATP = O-phospho-L-seryl-[protein] + ADP + H(+). It carries out the reaction L-threonyl-[protein] + ATP = O-phospho-L-threonyl-[protein] + ADP + H(+). The enzyme catalyses L-seryl-[tau protein] + ATP = O-phospho-L-seryl-[tau protein] + ADP + H(+). It catalyses the reaction L-threonyl-[tau protein] + ATP = O-phospho-L-threonyl-[tau protein] + ADP + H(+). Its activity is regulated as follows. Activated by phosphorylation on Thr-175 by STK11/LKB1. Serine/threonine-protein kinase that plays a key role in polarization of neurons and axonogenesis, cell cycle progress and insulin secretion. Phosphorylates CDK16, CDC25C, MAPT/TAU, PAK1 and WEE1. Following phosphorylation and activation by STK11/LKB1, acts as a key regulator of polarization of cortical neurons, probably by mediating phosphorylation of microtubule-associated proteins such as MAPT/TAU at 'Thr-523' and 'Ser-573'. Also regulates neuron polarization by mediating phosphorylation of WEE1 at 'Ser-642' in post-mitotic neurons, leading to down-regulate WEE1 activity in polarized neurons. Plays a role in the regulation of the mitotic cell cycle progress and the onset of mitosis. Plays a role in the regulation of insulin secretion in response to elevated glucose levels, probably via phosphorylation of CDK16 and PAK1. While BRSK2 phosphorylated at Thr-175 can inhibit insulin secretion, BRSK2 phosphorylated at Thr-261 can promote insulin secretion. Regulates reorganization of the actin cytoskeleton. May play a role in the apoptotic response triggered by endoplasmic reticulum (ER) stress. In Rattus norvegicus (Rat), this protein is Serine/threonine-protein kinase BRSK2 (Brsk2).